A 270-amino-acid polypeptide reads, in one-letter code: Mediator of RNA polymerase II transcription subunit 4 (270 aa).

The disordered stretch occupies residues 1-25 (MAAASSGEKEKERPGGGLGAAGGNS). Alanine 2 bears the N-acetylalanine mark. Coiled coils occupy residues 24 to 48 (NSTR…IEML) and 90 to 131 (HHEM…AKEK). Phosphoserine is present on serine 32. The tract at residues 231–270 (MLPPNHSHDFLLEPPGHNKENEDDVEVMSTDSSSSSSDSD) is disordered. Residues 236 to 250 (HSHDFLLEPPGHNKE) show a composition bias toward basic and acidic residues. Residues 259-270 (STDSSSSSSDSD) are compositionally biased toward low complexity.

Belongs to the Mediator complex subunit 4 family. As to quaternary structure, component of the Mediator complex, which is composed of MED1, MED4, MED6, MED7, MED8, MED9, MED10, MED11, MED12, MED13, MED13L, MED14, MED15, MED16, MED17, MED18, MED19, MED20, MED21, MED22, MED23, MED24, MED25, MED26, MED27, MED29, MED30, MED31, CCNC, CDK8 and CDC2L6/CDK11. The MED12, MED13, CCNC and CDK8 subunits form a distinct module termed the CDK8 module. Mediator containing the CDK8 module is less active than Mediator lacking this module in supporting transcriptional activation. Individual preparations of the Mediator complex lacking one or more distinct subunits have been variously termed ARC, CRSP, DRIP, PC2, SMCC and TRAP.

The protein localises to the nucleus. Its function is as follows. Component of the Mediator complex, a coactivator involved in the regulated transcription of nearly all RNA polymerase II-dependent genes. Mediator functions as a bridge to convey information from gene-specific regulatory proteins to the basal RNA polymerase II transcription machinery. Mediator is recruited to promoters by direct interactions with regulatory proteins and serves as a scaffold for the assembly of a functional preinitiation complex with RNA polymerase II and the general transcription factors. This Bos taurus (Bovine) protein is Mediator of RNA polymerase II transcription subunit 4 (MED4).